A 151-amino-acid polypeptide reads, in one-letter code: Globin (151 aa).

The Globin domain maps to 2–151; it reads SLSDADKKAL…AAFNETLKKA (150 aa). Heme b is bound at residue His-100.

It belongs to the globin family.

The protein is Globin of Biomphalaria glabrata (Bloodfluke planorb).